We begin with the raw amino-acid sequence, 98 residues long: Large ribosomal subunit protein uL23 (98 aa).

The protein belongs to the universal ribosomal protein uL23 family. Part of the 50S ribosomal subunit. Contacts protein L29, and trigger factor when it is bound to the ribosome.

One of the early assembly proteins it binds 23S rRNA. One of the proteins that surrounds the polypeptide exit tunnel on the outside of the ribosome. Forms the main docking site for trigger factor binding to the ribosome. This is Large ribosomal subunit protein uL23 from Cereibacter sphaeroides (strain ATCC 17025 / ATH 2.4.3) (Rhodobacter sphaeroides).